We begin with the raw amino-acid sequence, 329 residues long: N-acetyl-gamma-glutamyl-phosphate reductase (329 aa).

Cysteine 155 is an active-site residue.

The protein belongs to the NAGSA dehydrogenase family. Type 1 subfamily.

It is found in the cytoplasm. It catalyses the reaction N-acetyl-L-glutamate 5-semialdehyde + phosphate + NADP(+) = N-acetyl-L-glutamyl 5-phosphate + NADPH + H(+). It functions in the pathway amino-acid biosynthesis; L-arginine biosynthesis; N(2)-acetyl-L-ornithine from L-glutamate: step 3/4. Its function is as follows. Catalyzes the NADPH-dependent reduction of N-acetyl-5-glutamyl phosphate to yield N-acetyl-L-glutamate 5-semialdehyde. This Shewanella piezotolerans (strain WP3 / JCM 13877) protein is N-acetyl-gamma-glutamyl-phosphate reductase.